We begin with the raw amino-acid sequence, 197 residues long: Imidazoleglycerol-phosphate dehydratase (197 aa).

It belongs to the imidazoleglycerol-phosphate dehydratase family.

The protein localises to the cytoplasm. It catalyses the reaction D-erythro-1-(imidazol-4-yl)glycerol 3-phosphate = 3-(imidazol-4-yl)-2-oxopropyl phosphate + H2O. It participates in amino-acid biosynthesis; L-histidine biosynthesis; L-histidine from 5-phospho-alpha-D-ribose 1-diphosphate: step 6/9. The polypeptide is Imidazoleglycerol-phosphate dehydratase (Alkalilimnicola ehrlichii (strain ATCC BAA-1101 / DSM 17681 / MLHE-1)).